The chain runs to 440 residues: Putative postmeiotic segregation increased 2-like protein 1 (440 aa).

The segment covering 164-178 has biased composition (basic and acidic residues); the sequence is RVEHNVESSRWEPRR. The interval 164 to 215 is disordered; it reads RVEHNVESSRWEPRRRGACGSRGGNFPSPRGGSGVASLERAESSSTEPAKAI. A Histidine kinase domain is found at 230-364; sequence PVVPSLSTAV…MTVSVKQLFS (135 aa).

It belongs to the DNA mismatch repair MutL/HexB family. Highly expressed in kidney, spleen, adrenal gland, ovary and cerebellum and to a lower extent in liver, esophagus, stomach, duodenum, colon, bladder, uterus, lung, pancreas and cerebrum. Not expressed in heart.

The polypeptide is Putative postmeiotic segregation increased 2-like protein 1 (PMS2P1) (Homo sapiens (Human)).